We begin with the raw amino-acid sequence, 105 residues long: MTLLHDLEQTILSRKGTDPDTSWTAKLLSKGPEKCAEKFGEEAIEAIIEAVKDDKAKLASEGADVLYHFLVMLAARDVALDDVLTVLAERQGLSGLAEKAARPKG.

Belongs to the PRA-PH family.

It localises to the cytoplasm. The enzyme catalyses 1-(5-phospho-beta-D-ribosyl)-ATP + H2O = 1-(5-phospho-beta-D-ribosyl)-5'-AMP + diphosphate + H(+). It participates in amino-acid biosynthesis; L-histidine biosynthesis; L-histidine from 5-phospho-alpha-D-ribose 1-diphosphate: step 2/9. The polypeptide is Phosphoribosyl-ATP pyrophosphatase (Ruegeria sp. (strain TM1040) (Silicibacter sp.)).